We begin with the raw amino-acid sequence, 559 residues long: 3-phosphoinositide-dependent protein kinase 1 (559 aa).

Tyr9 is modified (phosphotyrosine; by SRC and INSR). A Phosphoserine modification is found at Ser25. The tract at residues 25-83 is disordered; sequence SPSMVRSQTEPGSSPGIPSGVSRQGSTMDGTTAEARPSTNPLQQHPAQLPPQPRKKRPE. Residues 35–44 are compositionally biased toward low complexity; sequence PGSSPGIPSG. The segment covering 45–54 has biased composition (polar residues); that stretch reads VSRQGSTMDG. Residues 85–345 form the Protein kinase domain; the sequence is FKFGKILGEG…YGPLKAHPFF (261 aa). ATP contacts are provided by residues 95 to 97 and Lys114; that span reads SFS. Residues 116–160 are PIF-pocket; sequence LEKRHIIKENKVPYVTRERDVMSRLDHPFFVKLYFTFQDDEKLYF. ATP contacts are provided by residues 163-165 and Glu169; that span reads SYA. Asp208 serves as the catalytic Proton acceptor. Positions 212 and 226 each coordinate ATP. A Phosphoserine modification is found at Ser244. Position 307 is an N6-acetyllysine (Lys307). Thr357 bears the Phosphothreonine; by MELK mark. A phosphotyrosine; by SRC and INSR mark is found at Tyr376 and Tyr379. A Phosphoserine modification is found at Ser396. Ser397 is subject to Phosphoserine; by MAP3K5. A Phosphoserine modification is found at Ser399. Position 401 is a phosphoserine; by MAP3K5 (Ser401). Residue Ser413 is modified to Phosphoserine. Positions 462–553 constitute a PH domain; the sequence is KMGPVDKRKG…EVWRQQYQSN (92 aa). Position 504 is a phosphoserine; by PKC/PRKCQ (Ser504). The residue at position 516 (Thr516) is a Phosphothreonine; by autocatalysis. Position 532 is a phosphoserine; by PKC/PRKCQ (Ser532).

This sequence belongs to the protein kinase superfamily. AGC Ser/Thr protein kinase family. PDPK1 subfamily. As to quaternary structure, homodimer in its autoinhibited state. Active as monomer. Interacts with NPRL2, PAK1, PTK2B, GRB14, STRAP and IKKB. The Tyr-9 phosphorylated form interacts with SRC, RASA1 and CRK (via their SH2 domains). Interacts with SGK3 in a phosphorylation-dependent manner. The tyrosine-phosphorylated form interacts with PTPN6. The Ser-244 phosphorylated form interacts with YWHAH and YWHAQ. Binds INSR in response to insulin. Interacts (via PH domain) with SMAD3, SMAD4 and SMAD7. Interacts with PKN2; the interaction stimulates PDPK1 autophosphorylation, its PI(3,4,5)P3-dependent kinase activity toward 'Ser-473' of AKT1 but also activates its kinase activity toward PRKCD and PRKCZ. Interacts with PKN1 (via C-terminus) and PPARG. Post-translationally, phosphorylation on Ser-244 in the activation loop is required for full activity. PDPK1 itself can autophosphorylate Ser-244, leading to its own activation. Autophosphorylation is inhibited by the apoptotic C-terminus cleavage product of PKN2. Tyr-9 phosphorylation is critical for stabilization of both PDPK1 and the PDPK1/SRC complex via HSP90-mediated protection of PDPK1 degradation. Angiotensin II stimulates the tyrosine phosphorylation of PDPK1 in vascular smooth muscle in a calcium- and SRC-dependent manner. Phosphorylated on Tyr-9, Tyr-376 and Tyr-379 by INSR in response to insulin. Palmitate negatively regulates autophosphorylation at Ser-244 and palmitate-induced phosphorylation at Ser-532 and Ser-504 by PKC/PRKCQ negatively regulates its ability to phosphorylate PKB/AKT1. Phosphorylation at Thr-357 by MELK partially inhibits kinase activity, the inhibition is cooperatively enhanced by phosphorylation at Ser-397 and Ser-401 by MAP3K5. Monoubiquitinated in the kinase domain, deubiquitinated by USP4. As to expression, highly expressed in heart, brain, liver and testis, also expressed in embryonic cells.

The protein resides in the cytoplasm. The protein localises to the nucleus. Its subcellular location is the cell membrane. It is found in the cell junction. It localises to the focal adhesion. It catalyses the reaction L-seryl-[protein] + ATP = O-phospho-L-seryl-[protein] + ADP + H(+). The catalysed reaction is L-threonyl-[protein] + ATP = O-phospho-L-threonyl-[protein] + ADP + H(+). Homodimerization regulates its activity by maintaining the kinase in an autoinhibitory conformation. NPRL2 down-regulates its activity by interfering with tyrosine phosphorylation at the Tyr-9, Tyr-376 and Tyr-379 residues. The 14-3-3 protein YWHAQ acts as a negative regulator by association with the residues surrounding the Ser-244 residue. STRAP positively regulates its activity by enhancing its autophosphorylation and by stimulating its dissociation from YWHAQ. SMAD2, SMAD3, SMAD4 and SMAD7 also positively regulate its activity by stimulating its dissociation from YWHAQ. Activated by phosphorylation on Tyr-9, Tyr-376 and Tyr-379 by INSR in response to insulin. Functionally, serine/threonine kinase which acts as a master kinase, phosphorylating and activating a subgroup of the AGC family of protein kinases. Its targets include: protein kinase B (PKB/AKT1, PKB/AKT2, PKB/AKT3), p70 ribosomal protein S6 kinase (RPS6KB1), p90 ribosomal protein S6 kinase (RPS6KA1, RPS6KA2 and RPS6KA3), cyclic AMP-dependent protein kinase (PRKACA), protein kinase C (PRKCD and PRKCZ), serum and glucocorticoid-inducible kinase (SGK1, SGK2 and SGK3), p21-activated kinase-1 (PAK1), TSSK3, protein kinase PKN (PKN1 and PKN2). Plays a central role in the transduction of signals from insulin by providing the activating phosphorylation to PKB/AKT1, thus propagating the signal to downstream targets controlling cell proliferation and survival, as well as glucose and amino acid uptake and storage. Negatively regulates the TGF-beta-induced signaling by: modulating the association of SMAD3 and SMAD7 with TGF-beta receptor, phosphorylating SMAD2, SMAD3, SMAD4 and SMAD7, preventing the nuclear translocation of SMAD3 and SMAD4 and the translocation of SMAD7 from the nucleus to the cytoplasm in response to TGF-beta. Activates PPARG transcriptional activity and promotes adipocyte differentiation. Activates the NF-kappa-B pathway via phosphorylation of IKKB. The tyrosine phosphorylated form is crucial for the regulation of focal adhesions by angiotensin II. Controls proliferation, survival, and growth of developing pancreatic cells. Participates in the regulation of Ca(2+) entry and Ca(2+)-activated K(+) channels of mast cells. Essential for the motility of vascular endothelial cells (ECs) and is involved in the regulation of their chemotaxis. Plays a critical role in cardiac homeostasis by serving as a dual effector for cell survival and beta-adrenergic response. Plays an important role during thymocyte development by regulating the expression of key nutrient receptors on the surface of pre-T cells and mediating Notch-induced cell growth and proliferative responses. Provides negative feedback inhibition to toll-like receptor-mediated NF-kappa-B activation in macrophages. This chain is 3-phosphoinositide-dependent protein kinase 1 (Pdpk1), found in Mus musculus (Mouse).